The primary structure comprises 617 residues: Vacuolar protein sorting-associated protein 33A (617 aa).

The interval Asn268 to Glu287 is disordered.

This sequence belongs to the STXBP/unc-18/SEC1 family. As to quaternary structure, component of the class C core vacuole/endosome tethering (CORVET) complex composed of at least Vps8, dor/Vps18, car/Vps33A and Vps16A; unlike in other species, Vps11 is not part of the Drosophila complex. Due to the reduced number of components the Drosophila CORVET complex is often referred to as the miniCORVET complex. Interacts with ema. Component of the homotypic fusion and vacuole protein sorting (HOPS) complex, composed of Vps16A, car/Vps33A, dor/Vps18, Vps39, Vps11 and lt/Vps41. The tethering complex core made up of Vps16A, car/Vps33A and dor/Vps18 and shared by both HOPS and CORVET, preferentially associates with CORVET specific Vps8 over HOPS specific lt/Vps41. Interacts with Syx17 (via SNARE domain); the interaction requires Vps16A, may involve additional components of the HOPS complex and may promote assembly of the Syx17-Snap29-Vamp7 trans-SNARE complex.

The protein resides in the early endosome. It localises to the late endosome membrane. The protein localises to the lysosome membrane. Its function is as follows. Core component of the class C core vacuole/endosome tethering (CORVET) and the homotypic fusion and vacuole protein sorting (HOPS) tethering complexes involved in endo-lysosomal vesicle trafficking and lysosome biogenesis. The CORVET complex facilitates docking and fusion of endosomal vesicles during endosome maturation, acts upstream of HOPS, but is not involved in autophagic flux. The CORVET complex may cooperate with the early endosomal tether Rbsn-5 to mediate endosomal fusion. The HOPS complex facilitates docking and fusion of lysosomes with late endosomes and several other types of vesicles. The HOPS complex is also involved in autophagy and crinophagy (the elimination of unused secretory granules through their fusion with lysosomes). The HOPS complex probably instigates autophagosome-lysosome fusion by binding autophagosome associated Syx17/syntaxin 17 and promoting assembly of the trans-SNARE complex. Independent of Syx17/syntaxin 17 HOPS is involved in biosynthetic transport to lysosomes and lysosome-related organelles such as eye-pigment granules. Required for endocytic degradation of boss/bride of sevenless and N/Notch in developing ommatidia. The polypeptide is Vacuolar protein sorting-associated protein 33A (Drosophila melanogaster (Fruit fly)).